A 373-amino-acid chain; its full sequence is tRNA-specific 2-thiouridylase MnmA (373 aa).

Residues 12 to 19 (GMSGGVDS) and methionine 38 each bind ATP. The tract at residues 98 to 100 (NPD) is interaction with target base in tRNA. The Nucleophile role is filled by cysteine 103. A disulfide bridge links cysteine 103 with cysteine 200. Residue glycine 127 participates in ATP binding. The interval 150–152 (KDQ) is interaction with tRNA. Catalysis depends on cysteine 200, which acts as the Cysteine persulfide intermediate. The interval 312 to 313 (RY) is interaction with tRNA.

The protein belongs to the MnmA/TRMU family.

Its subcellular location is the cytoplasm. The enzyme catalyses S-sulfanyl-L-cysteinyl-[protein] + uridine(34) in tRNA + AH2 + ATP = 2-thiouridine(34) in tRNA + L-cysteinyl-[protein] + A + AMP + diphosphate + H(+). Catalyzes the 2-thiolation of uridine at the wobble position (U34) of tRNA, leading to the formation of s(2)U34. This Streptococcus pneumoniae (strain CGSP14) protein is tRNA-specific 2-thiouridylase MnmA.